The sequence spans 340 residues: Phosphoribosylformylglycinamidine cyclo-ligase (340 aa).

Belongs to the AIR synthase family.

Its subcellular location is the cytoplasm. It carries out the reaction 2-formamido-N(1)-(5-O-phospho-beta-D-ribosyl)acetamidine + ATP = 5-amino-1-(5-phospho-beta-D-ribosyl)imidazole + ADP + phosphate + H(+). It functions in the pathway purine metabolism; IMP biosynthesis via de novo pathway; 5-amino-1-(5-phospho-D-ribosyl)imidazole from N(2)-formyl-N(1)-(5-phospho-D-ribosyl)glycinamide: step 2/2. The protein is Phosphoribosylformylglycinamidine cyclo-ligase of Streptococcus agalactiae serotype Ia (strain ATCC 27591 / A909 / CDC SS700).